Here is a 321-residue protein sequence, read N- to C-terminus: Transaldolase (321 aa).

Lys132 acts as the Schiff-base intermediate with substrate in catalysis.

Belongs to the transaldolase family. Type 1 subfamily. As to quaternary structure, homodimer.

Its subcellular location is the cytoplasm. It carries out the reaction D-sedoheptulose 7-phosphate + D-glyceraldehyde 3-phosphate = D-erythrose 4-phosphate + beta-D-fructose 6-phosphate. It functions in the pathway carbohydrate degradation; pentose phosphate pathway; D-glyceraldehyde 3-phosphate and beta-D-fructose 6-phosphate from D-ribose 5-phosphate and D-xylulose 5-phosphate (non-oxidative stage): step 2/3. In terms of biological role, transaldolase is important for the balance of metabolites in the pentose-phosphate pathway. The polypeptide is Transaldolase (Agrobacterium fabrum (strain C58 / ATCC 33970) (Agrobacterium tumefaciens (strain C58))).